The sequence spans 99 residues: Small ribosomal subunit protein uS19 (99 aa).

Residues 77-99 (TRTFHGHSGDKKAKVAKGGPGGR) are disordered.

Belongs to the universal ribosomal protein uS19 family.

Protein S19 forms a complex with S13 that binds strongly to the 16S ribosomal RNA. The sequence is that of Small ribosomal subunit protein uS19 from Sorangium cellulosum (strain So ce56) (Polyangium cellulosum (strain So ce56)).